Here is a 994-residue protein sequence, read N- to C-terminus: NACHT, LRR and PYD domains-containing protein 4 (994 aa).

The Pyrin domain occupies 1–94 (MAASFFSDFG…CMKVMRERTG (94 aa)). Residues 149–472 (RTVIIQGPQG…FYLLKSHLDH (324 aa)) enclose the NACHT domain. 155 to 162 (GPQGIGKT) is a binding site for ATP. 8 LRR repeats span residues 637-660 (SGHL…TWCN), 698-721 (YLSF…LNYP), 722-745 (AGNV…VLAG), 750-777 (NKKL…LCSP), 806-833 (NKSV…ALKH), 863-886 (NQNL…LLCR), 920-943 (SKTL…VLCE), and 949-972 (ECAL…LLTA).

It belongs to the NLRP family. As to quaternary structure, interacts with CHUK/IKKA, inhibiting its kinase activity.

Functionally, may be involved in inflammation and recognition of cytosolic pathogen-associated molecular patterns (PAMPs) not intercepted by membrane-bound receptors. Acts as a negative regulator of the type I interferon signaling pathway by serving as an adapter to promote DTX4-mediated ubiquitination of activated TBK1, and its subsequent degradation. Suppresses NF-kappaB induction by the cytokines TNFA and IL1B, suggesting that it operates at a point of convergence in these two cytokine signaling pathways. The protein is NACHT, LRR and PYD domains-containing protein 4 of Homo sapiens (Human).